The following is a 526-amino-acid chain: Cell adhesion molecule CEACAM1 (526 aa).

The signal sequence occupies residues 1 to 34; sequence MGHLSAPLHRVRVPWQGLLLTASLLTFWNPPTTA. Gln35 is subject to Pyrrolidone carboxylic acid. Residues 35-142 form the Ig-like V-type domain; the sequence is QLTTESMPFN…EATGQFHVYP (108 aa). Residues 35-428 lie on the Extracellular side of the membrane; the sequence is QLTTESMPFN…LPQENGLSPG (394 aa). The segment at 39–142 is required for homophilic binding; sequence ESMPFNVAEG…EATGQFHVYP (104 aa). Asn104, Asn111, Asn115, Asn152, Asn182, Asn197, Asn208, Asn224, Asn232, Asn254, Asn274, Asn288, Asn292, Asn302, Asn309, Asn345, Asn351, Asn363, Asn378, and Asn405 each carry an N-linked (GlcNAc...) asparagine glycan. Ig-like C2-type domains are found at residues 145 to 232, 237 to 317, and 323 to 413; these read PKPS…VTLN, PDTP…KTII, and PVVA…IMLN. Cysteines 167 and 215 form a disulfide. A disulfide bond links Cys259 and Cys299. A disulfide bond links Cys348 and Cys396. A helical membrane pass occupies residues 429-452; sequence AIAGIVIGVVALVALIAVALACFL. The tract at residues 450 to 462 is interaction with calmodulin; the sequence is CFLHFGKTGRASD. An interaction with FLNA region spans residues 452–526; sequence LHFGKTGRAS…EIIYSEVKKQ (75 aa). Residues 453-526 are Cytoplasmic-facing; that stretch reads HFGKTGRASD…EIIYSEVKKQ (74 aa). Residues 461 to 482 show a composition bias toward basic and acidic residues; it reads SDQRDLTEHKPSVSNHTQDHSN. Residues 461 to 513 are disordered; the sequence is SDQRDLTEHKPSVSNHTQDHSNDPPNKMNEVTYSTLNFEAQQPTQPTSASPSL. Residues 489 to 513 show a composition bias toward polar residues; sequence NEVTYSTLNFEAQQPTQPTSASPSL. A required for interaction with PTPN11 and PTPN6 and for control of phosphorylation level region spans residues 489 to 526; it reads NEVTYSTLNFEAQQPTQPTSASPSLTATEIIYSEVKKQ. Tyr493 carries the phosphotyrosine; by SRC, LCK, INSR and EGFR modification. Ser508 carries the post-translational modification Phosphoserine. Position 520 is a phosphotyrosine; by INSR, SRC and LCK (Tyr520). The interval 520–523 is essential for interaction with PTPN11 and PTPN6; the sequence is YSEV.

This sequence belongs to the immunoglobulin superfamily. CEA family. In terms of assembly, monomer. Oligomer. Heterodimer. Homodimer. Cis-dimer/oligomer (via Ig-like C2-type and/or via cytoplasmic domains); induced by trans-homophilic cell adhesion through an allosteric mechanism transmitted by the Ig-like V-type domain, and is regulated by intracellular calcium and calmodulin. Interacts (via cytoplasmic domain) with calmodulin in a calcium dependent manner; reduces homophilic cell adhesion through dissociation of dimer. Isoform 1 interacts (via cytoplasmic domain) with PTPN11 (preferentially) and PTPN6; cis-homodimer form is preferred; this interaction is decreased by formation of Isoform 1 /Isoform 8 cis-heterodimers and is dependent on the monomer/dimer equilibrium; this interaction is phosphorylation-dependent. Isoform 1 interacts with LYN. Isoform 1 interacts (via cytoplasmic domain) with SRC (via SH2 domain); this interaction is regulated by trans-homophilic cell adhesion. Isoform 1 interacts (via cytoplasmic domain) with LCK; mediates phosphorylation at Tyr-493 and Tyr-520 resulting in PTPN6 association. Isoform 1 interacts with PTPN6; this interaction is phosphorylation-dependent and causes a profound decrease in TCR stimulation-induced CD247 and ZAP70 phosphorylation. Isoform 1 interacts with TCR/CD3 complex through TCR beta chain and CD3E; colocalizes at the cell surface and upon stimulation of the TCR/CD3 complex recruits PTPN6 in the TCR/CD3 complex, resulting in dephosphorylation of CD247 and ZAP70. Isoform 1 interacts (via cytoplasmic domain) with SHC1 (via SH2 domain); SHC1 mediates interaction with INSR or EGFR in a Ser-508 phosphorylation-dependent manner. Isoform 1 interacts with EGFR; the interaction is indirect. Isoform 1 interacts with CSF3R; down-regulates the CSF3R-STAT3 pathway through recruitment of PTPN6 that dephosphorylates CSF3R. Isoform 1 (phosphorylated form) interacts with TLR4 and SYK; recruits PTPN6 that dephosphorylates SYK, reducing the production of reactive oxygen species (ROS) and lysosome disruption, leading to a reduction of the inflammasome activity. Isoform 1 interacts with FLNA; inhibits cell migration and cell scattering by interfering with the interaction of FLNA with RALA. Isoform 1 interacts (via cytoplasmic domain) with PXN; the interaction is phosphotyrosyl-dependent. Isoform 1 interacts with KLRK1; recruits PTPN6 that dephosphorylates VAV1. Isoform 1 interacts with CEACAM8. Isoform 1 interacts with FASN; this interaction is insulin and phosphorylation-dependent; reduces fatty-acid synthase activity. Interacts (via Ig-like V-type) with HAVCR2 (via Ig-like V-type); facilitates the maturation and cell surface expression of HAVCR2 thereby regulating T cell tolerance induction. Isoform 8 interacts (via the cytoplasmic domain) with ANXA2; this interaction is regulated by phosphorylation and appears in the AIIt complex. Interacts (via Lewis X moieties) with CD209 (via C-type lectin domain); this interaction is regulated by the glycosylation pattern of CEACAM1 on cell types and regulates contact between dendritic cells and neutrophils. Phosphorylated on serine and tyrosine. Isoform 1 is phosphorylated on tyrosine by Src family kinases like SRC and LCK and by receptor like CSF3R, EGFR and INSR upon stimulation. Phosphorylated at Ser-508; mediates activity. Phosphorylated at Tyr-493; regulates activity. Phosphorylated at Tyr-493 by EGFR and INSR upon stimulation; this phosphorylation is Ser-508-phosphorylation-dependent; mediates cellular internalization; increases interaction with downstream proteins like SHC1 and FASN. Phosphorylated at Tyr-493 and Tyr-520 by LCK; mediates PTPN6 association and is regulated by homophilic ligation of CEACAM1 in the absence of T cell activation. Phosphorylated at Tyr-520; mediates interaction with PTPN11. In terms of processing, phosphorylated on serine and threonine. As to expression, expressed in columnar epithelial cells of the colon (at protein level). The predominant forms expressed by T cells are those containing a long cytoplasmic domain. Expressed in granulocytes and lymphocytes. Leukocytes only express isoforms 6 and isoform 1.

Its subcellular location is the cell membrane. It localises to the lateral cell membrane. The protein localises to the apical cell membrane. It is found in the basal cell membrane. The protein resides in the cell junction. Its subcellular location is the adherens junction. It localises to the secreted. The protein localises to the cytoplasmic vesicle. It is found in the secretory vesicle membrane. The protein resides in the cell projection. Its subcellular location is the microvillus membrane. Its function is as follows. Cell adhesion protein that mediates homophilic cell adhesion in a calcium-independent manner. Plays a role as coinhibitory receptor in immune response, insulin action and also functions as an activator during angiogenesis. Its coinhibitory receptor function is phosphorylation- and PTPN6 -dependent, which in turn, suppress signal transduction of associated receptors by dephosphorylation of their downstream effectors. Plays a role in immune response, of T cells, natural killer (NK) and neutrophils. Upon TCR/CD3 complex stimulation, inhibits TCR-mediated cytotoxicity by blocking granule exocytosis by mediating homophilic binding to adjacent cells, allowing interaction with and phosphorylation by LCK and interaction with the TCR/CD3 complex which recruits PTPN6 resulting in dephosphorylation of CD247 and ZAP70. Also inhibits T cell proliferation and cytokine production through inhibition of JNK cascade and plays a crucial role in regulating autoimmunity and anti-tumor immunity by inhibiting T cell through its interaction with HAVCR2. Upon natural killer (NK) cells activation, inhibit KLRK1-mediated cytolysis of CEACAM1-bearing tumor cells by trans-homophilic interactions with CEACAM1 on the target cell and lead to cis-interaction between CEACAM1 and KLRK1, allowing PTPN6 recruitment and then VAV1 dephosphorylation. Upon neutrophils activation negatively regulates IL1B production by recruiting PTPN6 to a SYK-TLR4-CEACAM1 complex, that dephosphorylates SYK, reducing the production of reactive oxygen species (ROS) and lysosome disruption, which in turn, reduces the activity of the inflammasome. Down-regulates neutrophil production by acting as a coinhibitory receptor for CSF3R by down-regulating the CSF3R-STAT3 pathway through recruitment of PTPN6 that dephosphorylates CSF3R. Also regulates insulin action by promoting INS clearance and regulating lipogenesis in liver through regulating insulin signaling. Upon INS stimulation, undergoes phosphorylation by INSR leading to INS clearance by increasing receptor-mediated insulin endocytosis. This inernalization promotes interaction with FASN leading to receptor-mediated insulin degradation and to reduction of FASN activity leading to negative regulation of fatty acid synthesis. INSR-mediated phosphorylation also provokes a down-regulation of cell proliferation through SHC1 interaction resulting in decrease coupling of SHC1 to the MAPK3/ERK1-MAPK1/ERK2 and phosphatidylinositol 3-kinase pathways. Functions as activator in angiogenesis by promoting blood vessel remodeling through endothelial cell differentiation and migration and in arteriogenesis by increasing the number of collateral arteries and collateral vessel calibers after ischemia. Also regulates vascular permeability through the VEGFR2 signaling pathway resulting in control of nitric oxide production. Down-regulates cell growth in response to EGF through its interaction with SHC1 that mediates interaction with EGFR resulting in decrease coupling of SHC1 to the MAPK3/ERK1-MAPK1/ERK2 pathway. Negatively regulates platelet aggregation by decreasing platelet adhesion on type I collagen through the GPVI-FcRgamma complex. Inhibits cell migration and cell scattering through interaction with FLNA; interferes with the interaction of FLNA with RALA. Mediates bile acid transport activity in a phosphorylation dependent manner. Negatively regulates osteoclastogenesis. In terms of biological role, cell adhesion protein that mediates homophilic cell adhesion in a calcium-independent manner. Promotes populations of T cells regulating IgA production and secretion associated with control of the commensal microbiota and resistance to enteropathogens. The protein is Cell adhesion molecule CEACAM1 of Homo sapiens (Human).